The primary structure comprises 173 residues: Phosphopantetheine adenylyltransferase (173 aa).

Thr9 is a binding site for substrate. ATP contacts are provided by residues 9–10 (TF) and His17. Residues Lys41, Thr75, and Arg89 each contribute to the substrate site. ATP contacts are provided by residues 90–92 (GLR), Glu100, and 125–131 (HIYLSSS).

The protein belongs to the bacterial CoaD family. As to quaternary structure, homohexamer. Requires Mg(2+) as cofactor.

It localises to the cytoplasm. The catalysed reaction is (R)-4'-phosphopantetheine + ATP + H(+) = 3'-dephospho-CoA + diphosphate. Its pathway is cofactor biosynthesis; coenzyme A biosynthesis; CoA from (R)-pantothenate: step 4/5. Functionally, reversibly transfers an adenylyl group from ATP to 4'-phosphopantetheine, yielding dephospho-CoA (dPCoA) and pyrophosphate. In Methylacidiphilum infernorum (isolate V4) (Methylokorus infernorum (strain V4)), this protein is Phosphopantetheine adenylyltransferase.